The sequence spans 390 residues: Curcumin synthase 3 (390 aa).

The active site involves cysteine 164.

Belongs to the thiolase-like superfamily. Chalcone/stilbene synthases family. As to quaternary structure, homodimer.

It catalyses the reaction (E)-feruloylacetyl-CoA + (E)-feruloyl-CoA + H2O = curcumin + CO2 + 2 CoA. The enzyme catalyses (E)-feruloylacetyl-CoA + (E)-4-coumaroyl-CoA + H2O = demethoxycurcumin + CO2 + 2 CoA. The catalysed reaction is (4-coumaroyl)acetyl-CoA + 4-coumaroyl-CoA + H2O = bisdemethoxycurcumin + CO2 + 2 CoA. It participates in secondary metabolite biosynthesis; flavonoid biosynthesis. Catalyzes the synthesis of curcumin by condensing feruloyl-CoA with a diketide-CoA in the curcuminoid biosynthesis. Also acts as a demethoxycurcumin synthase by accepting 4-coumaroyl-CoA as a starter substrate instead of feruloyl-CoA. The sequence is that of Curcumin synthase 3 (CURS3) from Curcuma longa (Turmeric).